The sequence spans 120 residues: UPF0102 protein TW312 (120 aa).

Belongs to the UPF0102 family.

The protein is UPF0102 protein TW312 of Tropheryma whipplei (strain TW08/27) (Whipple's bacillus).